The primary structure comprises 122 residues: Flowering-promoting factor 1-like protein 3 (122 aa).

Residues 16–36 (ENPGSEESSSAGDGGGGGRRK) form a disordered region.

Belongs to the FPF1 family.

The polypeptide is Flowering-promoting factor 1-like protein 3 (Oryza sativa subsp. japonica (Rice)).